A 197-amino-acid chain; its full sequence is Dephospho-CoA kinase (197 aa).

A DPCK domain is found at 4–197 (RLGLTGSIGM…RQIRAGNIHA (194 aa)). 12–17 (GMGKST) is a binding site for ATP.

It belongs to the CoaE family.

It localises to the cytoplasm. The catalysed reaction is 3'-dephospho-CoA + ATP = ADP + CoA + H(+). The protein operates within cofactor biosynthesis; coenzyme A biosynthesis; CoA from (R)-pantothenate: step 5/5. Its function is as follows. Catalyzes the phosphorylation of the 3'-hydroxyl group of dephosphocoenzyme A to form coenzyme A. The sequence is that of Dephospho-CoA kinase from Ruegeria pomeroyi (strain ATCC 700808 / DSM 15171 / DSS-3) (Silicibacter pomeroyi).